The chain runs to 663 residues: UvrABC system protein B (663 aa).

Positions 1–10 are enriched in basic and acidic residues; that stretch reads MIDKRDDKPF. Residues 1 to 23 form a disordered region; sequence MIDKRDDKPFKLKSKYKPSGDQP. The 388-residue stretch at 31–418 folds into the Helicase ATP-binding domain; the sequence is DNIEGGEKAQ…TNTIIEQIIR (388 aa). Position 44 to 51 (44 to 51) interacts with ATP; it reads GATGTGKT. A Beta-hairpin motif is present at residues 97 to 120; the sequence is YYDYYQPEAYVPSSDTYIEKDSSV. Positions 435-601 constitute a Helicase C-terminal domain; the sequence is QMDDLLGEIN…TIKKDIRGLI (167 aa). The UVR domain occupies 627–662; the sequence is KEAINALQKQMQEAAELLDFELAAQMRDLILELKLM.

The protein belongs to the UvrB family. Forms a heterotetramer with UvrA during the search for lesions. Interacts with UvrC in an incision complex.

It is found in the cytoplasm. Functionally, the UvrABC repair system catalyzes the recognition and processing of DNA lesions. A damage recognition complex composed of 2 UvrA and 2 UvrB subunits scans DNA for abnormalities. Upon binding of the UvrA(2)B(2) complex to a putative damaged site, the DNA wraps around one UvrB monomer. DNA wrap is dependent on ATP binding by UvrB and probably causes local melting of the DNA helix, facilitating insertion of UvrB beta-hairpin between the DNA strands. Then UvrB probes one DNA strand for the presence of a lesion. If a lesion is found the UvrA subunits dissociate and the UvrB-DNA preincision complex is formed. This complex is subsequently bound by UvrC and the second UvrB is released. If no lesion is found, the DNA wraps around the other UvrB subunit that will check the other stand for damage. The protein is UvrABC system protein B of Streptococcus pyogenes serotype M28 (strain MGAS6180).